The chain runs to 524 residues: GMP synthase [glutamine-hydrolyzing] (524 aa).

One can recognise a Glutamine amidotransferase type-1 domain in the interval 8–206 (RILILDFGSQ…IYDICGCEAL (199 aa)). Cys-85 (nucleophile) is an active-site residue. Active-site residues include His-180 and Glu-182. The GMPS ATP-PPase domain occupies 207-399 (WEPRHIIAKS…LGLPFELVYR (193 aa)). An ATP-binding site is contributed by 234–240 (SGGVDSS).

In terms of assembly, homodimer.

It catalyses the reaction XMP + L-glutamine + ATP + H2O = GMP + L-glutamate + AMP + diphosphate + 2 H(+). Its pathway is purine metabolism; GMP biosynthesis; GMP from XMP (L-Gln route): step 1/1. Its function is as follows. Catalyzes the synthesis of GMP from XMP. The chain is GMP synthase [glutamine-hydrolyzing] from Nitrosococcus oceani (strain ATCC 19707 / BCRC 17464 / JCM 30415 / NCIMB 11848 / C-107).